Consider the following 113-residue polypeptide: Large ribosomal subunit protein bL19m (113 aa).

Belongs to the bacterial ribosomal protein bL19 family.

The protein localises to the mitochondrion. This is Large ribosomal subunit protein bL19m (RPL19) from Reclinomonas americana.